The chain runs to 103 residues: Co-chaperonin GroES (103 aa).

This sequence belongs to the GroES chaperonin family. In terms of assembly, heptamer of 7 subunits arranged in a ring. Interacts with the chaperonin GroEL.

Its subcellular location is the cytoplasm. Its function is as follows. Together with the chaperonin GroEL, plays an essential role in assisting protein folding. The GroEL-GroES system forms a nano-cage that allows encapsulation of the non-native substrate proteins and provides a physical environment optimized to promote and accelerate protein folding. GroES binds to the apical surface of the GroEL ring, thereby capping the opening of the GroEL channel. In Synechococcus sp. (strain WH7803), this protein is Co-chaperonin GroES.